The chain runs to 308 residues: Glycine--tRNA ligase alpha subunit (308 aa).

This sequence belongs to the class-II aminoacyl-tRNA synthetase family. In terms of assembly, tetramer of two alpha and two beta subunits.

The protein resides in the cytoplasm. It catalyses the reaction tRNA(Gly) + glycine + ATP = glycyl-tRNA(Gly) + AMP + diphosphate. The sequence is that of Glycine--tRNA ligase alpha subunit from Brucella abortus (strain 2308).